A 236-amino-acid chain; its full sequence is uncharacterized protein (236 aa).

An HTH gntR-type domain is found at 1–69; that stretch reads MLKYQQIATE…RGSGIFVRKH (69 aa). Positions 29–48 form a DNA-binding region, H-T-H motif; the sequence is LETLMAQFEVSKSTITKSLE.

This is an uncharacterized protein from Bacillus subtilis (strain 168).